Here is a 299-residue protein sequence, read N- to C-terminus: Protein sprouty homolog 4 (299 aa).

Methionine 1 carries the post-translational modification N-acetylmethionine. Disordered regions lie at residues 55–79 (NPSL…PTPA) and 92–126 (FSGR…QASP). Positions 92-107 (FSGRPSSVSSSSSTSS) are enriched in low complexity. The residue at position 125 (serine 125) is a Phosphoserine. Positions 166 to 273 (KCKECASPRT…GYDRLRRPGC (108 aa)) constitute an SPR domain. The interval 181-299 (VCNQECLCSA…AKTSRPDKPF (119 aa)) is required for interaction with TESK1. Required for colocalization with TESK1 at vesicular spots in the cytoplasm and inhibition of TESK1 kinase activity, resulting in inhibition of cell spreading.

It belongs to the sprouty family. Interacts (via C-terminus) with TESK1 (via both C- and N-termini); the interaction inhibits TESK1 kinase activity. Interacts with RAF1. Interacts with CAV1 (via C-terminus).

Its subcellular location is the cytoplasm. The protein localises to the cell projection. It is found in the ruffle membrane. In terms of biological role, suppresses the insulin receptor and EGFR-transduced MAPK signaling pathway, but does not inhibit MAPK activation by a constitutively active mutant Ras. Probably impairs the formation of GTP-Ras. Inhibits Ras-independent, but not Ras-dependent, activation of RAF1. Represses integrin-mediated cell spreading via inhibition of TESK1-mediated phosphorylation of cofilin. This chain is Protein sprouty homolog 4 (SPRY4), found in Homo sapiens (Human).